Reading from the N-terminus, the 177-residue chain is MNAAIRDKNIVLIGFMGVGKTTIGQLVSKKLGRDFIDIDHEIEKDFQMTIPEMFQQKGEAFFRQTEKEYIFQMCEHTMGNIVSLGGGAFQQEEIRKKCLEHCFVIFLDLRWENWKQRMDLLIENRPVLHNRTIEEMKQLFNERKSIYAFHHLKVETDNRSAEETADYIVEMLKLGQS.

ATP is bound at residue 17 to 22; that stretch reads GVGKTT. Thr-21 serves as a coordination point for Mg(2+). The substrate site is built by Asp-39, Arg-63, and Gly-86. Arg-125 provides a ligand contact to ATP. Arg-143 is a substrate binding site. Arg-159 lines the ATP pocket.

The protein belongs to the shikimate kinase family. In terms of assembly, monomer. Mg(2+) serves as cofactor.

Its subcellular location is the cytoplasm. The catalysed reaction is shikimate + ATP = 3-phosphoshikimate + ADP + H(+). Its pathway is metabolic intermediate biosynthesis; chorismate biosynthesis; chorismate from D-erythrose 4-phosphate and phosphoenolpyruvate: step 5/7. Catalyzes the specific phosphorylation of the 3-hydroxyl group of shikimic acid using ATP as a cosubstrate. The polypeptide is Shikimate kinase (Bacillus licheniformis (strain ATCC 14580 / DSM 13 / JCM 2505 / CCUG 7422 / NBRC 12200 / NCIMB 9375 / NCTC 10341 / NRRL NRS-1264 / Gibson 46)).